The primary structure comprises 628 residues: DNA ligase (628 aa).

Residues 36–40, 85–86, and E117 contribute to the NAD(+) site; these read DVEYD and SL. The active-site N6-AMP-lysine intermediate is K119. Residues R140, E174, K309, and K333 each coordinate NAD(+). Zn(2+) contacts are provided by C427, C430, C446, and C452.

The protein belongs to the NAD-dependent DNA ligase family. LigA subfamily. Mg(2+) serves as cofactor. Mn(2+) is required as a cofactor.

The catalysed reaction is NAD(+) + (deoxyribonucleotide)n-3'-hydroxyl + 5'-phospho-(deoxyribonucleotide)m = (deoxyribonucleotide)n+m + AMP + beta-nicotinamide D-nucleotide.. Functionally, DNA ligase that catalyzes the formation of phosphodiester linkages between 5'-phosphoryl and 3'-hydroxyl groups in double-stranded DNA using NAD as a coenzyme and as the energy source for the reaction. It is essential for DNA replication and repair of damaged DNA. The protein is DNA ligase of Tropheryma whipplei (strain Twist) (Whipple's bacillus).